Reading from the N-terminus, the 308-residue chain is MQLIIATRKSQLALWQSEYIKNKLSQTHSDLEISLEGFKTKGDVLLDSPLAKIGGKGLFTKELEESMLRGDSHLAVHSLKDVPSFFPKGLVLAAISKREEVNDAFLSEYYESLNALPKGAKVGTTSLRRRMQLLALRPDLNIISLRGNINSRLEKLKAKEFDAIILAFAGIKRLGLEKQIKFVKKFELDEMIPAASQGALGIESIDDKQILKYLECLNDKNAFVETHIERDFIKTLEGGCQVPIGINAKIIDEKIEIRAIVGLPDASKILKEKRMIDKQDYAKAGELLAKEMIAKGAKEILKEAESMI.

S-(dipyrrolylmethanemethyl)cysteine is present on Cys-240.

This sequence belongs to the HMBS family. In terms of assembly, monomer. Requires dipyrromethane as cofactor.

It catalyses the reaction 4 porphobilinogen + H2O = hydroxymethylbilane + 4 NH4(+). It functions in the pathway porphyrin-containing compound metabolism; protoporphyrin-IX biosynthesis; coproporphyrinogen-III from 5-aminolevulinate: step 2/4. Functionally, tetrapolymerization of the monopyrrole PBG into the hydroxymethylbilane pre-uroporphyrinogen in several discrete steps. The chain is Porphobilinogen deaminase from Campylobacter lari (strain RM2100 / D67 / ATCC BAA-1060).